The chain runs to 238 residues: Transcription factor PCL1 (238 aa).

Over residues 71–90 the composition is skewed to low complexity; the sequence is RLRRASSSSSSSFPAFASKG. Residues 71-119 are disordered; the sequence is RLRRASSSSSSSFPAFASKGAGTGADEAESGGGADGGNGNTNNSSSKRA. Residues 100–109 are compositionally biased toward gly residues; that stretch reads SGGGADGGNG. The segment at residues 115–174 is a DNA-binding region (myb-like GARP); it reads SSKRARLVWTPQLHKRFVEVVAHLGMKNAVPKTIMQLMNVEGLTRENVASHLQKYRLYVK.

It is found in the nucleus. In terms of biological role, transcription factor that is essential for the generation of the circadian clock oscillation. Binds to specific sites on CCA1 promoter leading to CCA1 activation. The polypeptide is Transcription factor PCL1 (PCL1) (Oryza sativa subsp. japonica (Rice)).